We begin with the raw amino-acid sequence, 261 residues long: Zinc finger protein 664 (261 aa).

C2H2-type zinc fingers lie at residues 3–25, 31–53, 59–81, 87–109, 115–137, 143–165, 171–193, 199–221, and 227–249; these read YKCPMCREFFSERADLFMHQKIH, HKCDKCDKGFFHISELHIHWRDH, YKCDDCGKDFSTTTKLNRHKKIH, YKCYECGKAFNWSSHLQIHMRVH, YVCSECGRGFSNSSNLCMHQRVH, FKCEECGKAFRHTSSLCMHQRVH, YKCYECGKAFSQSSSLCIHQRVH, YRCCGCGKAFSQSSSLCIHQRVH, and FKCDECGKAFSQSTSLCIHQRVH. Lysine 257 is covalently cross-linked (Glycyl lysine isopeptide (Lys-Gly) (interchain with G-Cter in SUMO2)).

Belongs to the krueppel C2H2-type zinc-finger protein family.

The protein resides in the nucleus. Functionally, may be involved in transcriptional regulation. The chain is Zinc finger protein 664 from Homo sapiens (Human).